The primary structure comprises 89 residues: Putative membrane protein insertion efficiency factor (89 aa).

The protein belongs to the UPF0161 family.

Its subcellular location is the cell membrane. Its function is as follows. Could be involved in insertion of integral membrane proteins into the membrane. The polypeptide is Putative membrane protein insertion efficiency factor (Exiguobacterium sp. (strain ATCC BAA-1283 / AT1b)).